The primary structure comprises 208 residues: NAD(P)H-quinone oxidoreductase subunit I (208 aa).

2 4Fe-4S ferredoxin-type domains span residues 55–84 and 95–124; these read GRIHYEFDKCIACEVCVRVCPINLPVVDWV and RNYSIDFGVCIFCGNCVEYCPTNCLSMTEE. [4Fe-4S] cluster contacts are provided by C64, C67, C70, C74, C104, C107, C110, and C114.

This sequence belongs to the complex I 23 kDa subunit family. As to quaternary structure, NDH-1 is composed of at least 11 different subunits. It depends on [4Fe-4S] cluster as a cofactor.

The protein localises to the cellular thylakoid membrane. It catalyses the reaction a plastoquinone + NADH + (n+1) H(+)(in) = a plastoquinol + NAD(+) + n H(+)(out). The catalysed reaction is a plastoquinone + NADPH + (n+1) H(+)(in) = a plastoquinol + NADP(+) + n H(+)(out). Functionally, NDH-1 shuttles electrons from an unknown electron donor, via FMN and iron-sulfur (Fe-S) centers, to quinones in the respiratory and/or the photosynthetic chain. The immediate electron acceptor for the enzyme in this species is believed to be plastoquinone. Couples the redox reaction to proton translocation, and thus conserves the redox energy in a proton gradient. The sequence is that of NAD(P)H-quinone oxidoreductase subunit I from Prochlorococcus marinus (strain MIT 9301).